A 298-amino-acid chain; its full sequence is Riboflavin transporter (298 aa).

9 helical membrane passes run 8–28 (LQGA…NSVA), 35–55 (FGLP…VVIL), 79–99 (VFLA…PVPI), 101–121 (QGIA…GLWL), 125–145 (VGMA…IILE), 151–171 (FNLA…YSLM), 184–204 (MVVY…LPDW), 211–231 (TVWL…WAIA), and 258–278 (WLVF…IIVL). EamA domains are found at residues 10–144 (GALW…MIIL) and 156–284 (LLPV…AFIT).

This sequence belongs to the drug/metabolite transporter (DMT) superfamily. 10 TMS drug/metabolite exporter (DME) (TC 2.A.7.3) family.

It is found in the cell membrane. Transports riboflavin into the cell. This chain is Riboflavin transporter, found in Vibrio cholerae serotype O1 (strain ATCC 39315 / El Tor Inaba N16961).